A 121-amino-acid polypeptide reads, in one-letter code: Putative iron-sulfur cluster insertion protein ErpA (121 aa).

Iron-sulfur cluster-binding residues include cysteine 49, cysteine 113, and cysteine 115.

This sequence belongs to the HesB/IscA family. Homodimer. The cofactor is iron-sulfur cluster.

Required for insertion of 4Fe-4S clusters. The protein is Putative iron-sulfur cluster insertion protein ErpA of Paracidovorax citrulli (strain AAC00-1) (Acidovorax citrulli).